The following is an 815-amino-acid chain: DNA topoisomerase 1 (815 aa).

The Toprim domain occupies 3-119 (KHLLIVESPA…QRIVFTEITP (117 aa)). Mg(2+) contacts are provided by E9 and D82. A Topo IA-type catalytic domain is found at 133–573 (ASDLVDAQQA…KFWVPFKELV (441 aa)). The interaction with DNA stretch occupies residues 167-172 (SAGRVQ). Y308 (O-(5'-phospho-DNA)-tyrosine intermediate) is an active-site residue. The tract at residues 760–815 (GKPARKNFSTKKTATKNETRKQTTKKRTTDAKATKKVSDKPVKKQIKKRIAPNITE) is disordered. Basic and acidic residues predominate over residues 774-801 (TKNETRKQTTKKRTTDAKATKKVSDKPV).

Belongs to the type IA topoisomerase family. In terms of assembly, monomer. It depends on Mg(2+) as a cofactor.

The catalysed reaction is ATP-independent breakage of single-stranded DNA, followed by passage and rejoining.. Functionally, releases the supercoiling and torsional tension of DNA, which is introduced during the DNA replication and transcription, by transiently cleaving and rejoining one strand of the DNA duplex. Introduces a single-strand break via transesterification at a target site in duplex DNA. The scissile phosphodiester is attacked by the catalytic tyrosine of the enzyme, resulting in the formation of a DNA-(5'-phosphotyrosyl)-enzyme intermediate and the expulsion of a 3'-OH DNA strand. The free DNA strand then undergoes passage around the unbroken strand, thus removing DNA supercoils. Finally, in the religation step, the DNA 3'-OH attacks the covalent intermediate to expel the active-site tyrosine and restore the DNA phosphodiester backbone. This chain is DNA topoisomerase 1, found in Xylella fastidiosa (strain 9a5c).